The primary structure comprises 102 residues: Small ribosomal subunit protein uS10 (102 aa).

It belongs to the universal ribosomal protein uS10 family. As to quaternary structure, part of the 30S ribosomal subunit.

Its function is as follows. Involved in the binding of tRNA to the ribosomes. This Cenarchaeum symbiosum (strain A) protein is Small ribosomal subunit protein uS10.